Consider the following 243-residue polypeptide: Adenosine 5'-phosphosulfate reductase (243 aa).

4 residues coordinate [4Fe-4S] cluster: Cys-126, Cys-127, Cys-209, and Cys-212. Catalysis depends on Cys-235, which acts as the Nucleophile; cysteine thiosulfonate intermediate.

It belongs to the PAPS reductase family. CysH subfamily. [4Fe-4S] cluster serves as cofactor.

It is found in the cytoplasm. It catalyses the reaction [thioredoxin]-disulfide + sulfite + AMP + 2 H(+) = adenosine 5'-phosphosulfate + [thioredoxin]-dithiol. It functions in the pathway sulfur metabolism; hydrogen sulfide biosynthesis; sulfite from sulfate. Catalyzes the formation of sulfite from adenosine 5'-phosphosulfate (APS) using thioredoxin as an electron donor. The polypeptide is Adenosine 5'-phosphosulfate reductase (Staphylococcus epidermidis (strain ATCC 35984 / DSM 28319 / BCRC 17069 / CCUG 31568 / BM 3577 / RP62A)).